Consider the following 568-residue polypeptide: Urease subunit alpha (568 aa).

Residues 130–568 enclose the Urease domain; the sequence is GGIDTHIHFI…LPMAQRYFLF (439 aa). Positions 135, 137, and 218 each coordinate Ni(2+). Lysine 218 is modified (N6-carboxylysine). Position 220 (histidine 220) interacts with substrate. Ni(2+)-binding residues include histidine 247 and histidine 273. Histidine 321 (proton donor) is an active-site residue. Aspartate 361 contributes to the Ni(2+) binding site.

Belongs to the metallo-dependent hydrolases superfamily. Urease alpha subunit family. As to quaternary structure, heterotrimer of UreA (gamma), UreB (beta) and UreC (alpha) subunits. Three heterotrimers associate to form the active enzyme. The cofactor is Ni cation. In terms of processing, carboxylation allows a single lysine to coordinate two nickel ions.

Its subcellular location is the cytoplasm. The catalysed reaction is urea + 2 H2O + H(+) = hydrogencarbonate + 2 NH4(+). It functions in the pathway nitrogen metabolism; urea degradation; CO(2) and NH(3) from urea (urease route): step 1/1. The polypeptide is Urease subunit alpha (Burkholderia multivorans (strain ATCC 17616 / 249)).